A 237-amino-acid polypeptide reads, in one-letter code: 4-hydroxy-tetrahydrodipicolinate reductase (237 aa).

NAD(+) contacts are provided by residues 11-16 (GASGRM), 92-94 (GTT), and 116-119 (GSNF). The active-site Proton donor/acceptor is the His-148. His-149 serves as a coordination point for (S)-2,3,4,5-tetrahydrodipicolinate. Residue Lys-152 is the Proton donor of the active site. 158–159 (GS) lines the (S)-2,3,4,5-tetrahydrodipicolinate pocket.

It belongs to the DapB family.

The protein localises to the cytoplasm. The enzyme catalyses (S)-2,3,4,5-tetrahydrodipicolinate + NAD(+) + H2O = (2S,4S)-4-hydroxy-2,3,4,5-tetrahydrodipicolinate + NADH + H(+). The catalysed reaction is (S)-2,3,4,5-tetrahydrodipicolinate + NADP(+) + H2O = (2S,4S)-4-hydroxy-2,3,4,5-tetrahydrodipicolinate + NADPH + H(+). It participates in amino-acid biosynthesis; L-lysine biosynthesis via DAP pathway; (S)-tetrahydrodipicolinate from L-aspartate: step 4/4. Functionally, catalyzes the conversion of 4-hydroxy-tetrahydrodipicolinate (HTPA) to tetrahydrodipicolinate. This Xylella fastidiosa (strain M12) protein is 4-hydroxy-tetrahydrodipicolinate reductase.